We begin with the raw amino-acid sequence, 319 residues long: HTH-type transcriptional regulator YidZ (319 aa).

The 58-residue stretch at 8–65 (LDLNLLLCLQLLMQERSVTKAAKRMNVTPSAVSKSLAKLRAWFDDPLFVNTPLGLAPT) folds into the HTH lysR-type domain. The H-T-H motif DNA-binding region spans 25–44 (VTKAAKRMNVTPSAVSKSLA).

It belongs to the LysR transcriptional regulatory family.

In terms of biological role, involved in anaerobic NO protection. The sequence is that of HTH-type transcriptional regulator YidZ from Salmonella agona (strain SL483).